The chain runs to 414 residues: TAR DNA-binding protein 43 (414 aa).

2 consecutive RRM domains span residues 104-200 (SDLI…RCTE) and 191-262 (RKVF…NAEP). A compositionally biased stretch (basic and acidic residues) spans 261-274 (EPKHNSNRQLERGG). Disordered regions lie at residues 261-303 (EPKH…GNNQ) and 341-373 (ASQQ…GNNS). Residues 275–303 (RFGGNPGGFGNQGGFGNSRGGGGGLGNNQ) are compositionally biased toward gly residues. The span at 342–373 (SQQNQSGPSGNNQPQGNMQREQNQGFSSGNNS) shows a compositional bias: low complexity.

In terms of assembly, homodimer.

The protein localises to the nucleus. It is found in the cytoplasm. Its subcellular location is the stress granule. The protein resides in the mitochondrion. Its function is as follows. Probably involved in transcriptional repression. May play a role in the maintenance of the circadian clock periodicity. The polypeptide is TAR DNA-binding protein 43 (TARDBP) (Gallus gallus (Chicken)).